We begin with the raw amino-acid sequence, 557 residues long: Formate--tetrahydrofolate ligase (557 aa).

Threonine 66–serine 73 contributes to the ATP binding site.

The protein belongs to the formate--tetrahydrofolate ligase family.

It catalyses the reaction (6S)-5,6,7,8-tetrahydrofolate + formate + ATP = (6R)-10-formyltetrahydrofolate + ADP + phosphate. It functions in the pathway one-carbon metabolism; tetrahydrofolate interconversion. The chain is Formate--tetrahydrofolate ligase from Clostridium botulinum (strain ATCC 19397 / Type A).